Here is a 306-residue protein sequence, read N- to C-terminus: MHSPNKFTSGPKQFLESEAITSYADAAVVVVPIPYEATTSYRKGCEHGPEAVLEASDQLEAYDEELGTSPCHDLGIYTCAPLADSNKHPALAGDAMVTEVCDGIAPFVEDGKFVVAIGGEHAITTGVVRAMQRGTSEPFTVVQIDAHGDMRDKFEGSCHNHACVMRRVLELGLPTLPIAIRAICQEEADLIREKNIPVFWAREMADNPNWINEAIASITTQKVFLTIDMDGFDPGFMPGVGTPEPGGLGWYEGLNFFRRLFQTKQVIGCDLMELAPVRGSVVSEFSTAKLAYKLMGYWGESQRKKL.

Mn(2+) contacts are provided by histidine 121, aspartate 145, histidine 147, aspartate 149, aspartate 228, and aspartate 230.

It belongs to the arginase family. Requires Mn(2+) as cofactor.

It carries out the reaction N(1)-(3-aminopropyl)agmatine + H2O = urea + spermidine. It participates in amine and polyamine biosynthesis; spermidine biosynthesis. In terms of biological role, ureohydrolase involved in the biosynthesis of spermidine via the carboxyaminopropylagmatine (CAPA) pathway. Catalyzes the conversion of aminopropylagmatine (APA) to spermidine and urea. Is highly specific to APA and incapable of releasing measurable urea from CAPA, agmatine, arginine, guanidine, guanidinobutyrate and guanidinopropionate. This is N(1)-aminopropylagmatine ureohydrolase from Synechocystis sp. (strain ATCC 27184 / PCC 6803 / Kazusa).